We begin with the raw amino-acid sequence, 724 residues long: Probable protein phosphatase 2C 62 (724 aa).

A disordered region spans residues 357–385 (DELISTSEATRHSVDEIAQKPIIDTSEKN). Residues 365 to 374 (ATRHSVDEIA) show a composition bias toward basic and acidic residues. The 238-residue stretch at 482–719 (DSGFASLQSP…DAVTVIISFV (238 aa)) folds into the PPM-type phosphatase domain. 4 residues coordinate Mn(2+): Asp-514, Gly-515, Asp-643, and Asp-710.

This sequence belongs to the PP2C family. Mg(2+) serves as cofactor. The cofactor is Mn(2+).

It catalyses the reaction O-phospho-L-seryl-[protein] + H2O = L-seryl-[protein] + phosphate. It carries out the reaction O-phospho-L-threonyl-[protein] + H2O = L-threonyl-[protein] + phosphate. This Arabidopsis thaliana (Mouse-ear cress) protein is Probable protein phosphatase 2C 62.